A 493-amino-acid chain; its full sequence is WAS/WASL-interacting protein family member 1 (493 aa).

The segment covering 1 to 14 has biased composition (pro residues); it reads MPVPPPPAPPPPPT. The interval 1–493 is disordered; that stretch reads MPVPPPPAPP…GAPPLPPIPR (493 aa). The segment covering 21-31 has biased composition (polar residues); it reads EKPTLNKTEQA. Residues 32-49 enclose the WH2 domain; sequence GRNALLSDISKGKKLKKT. Residue Arg-33 is modified to Asymmetric dimethylarginine. Residues 45–48 are binds actin; that stretch reads KLKK. Over residues 67–105 the composition is skewed to gly residues; it reads ASAGGYGGGGGGGGGGGGGGGGSGGNFGGGGPPGLGGLF. Arg-126 and Arg-135 each carry omega-N-methylarginine. 3 stretches are compositionally biased toward pro residues: residues 142-155, 162-175, and 183-195; these read FSPP…PAPS, PPEP…PPRP, and SLPP…PRPV. Ser-143 is subject to Phosphoserine. Position 227 is a phosphoserine (Ser-227). Composition is skewed to pro residues over residues 239–248, 274–290, and 298–315; these read FPRPPLPPTP, VPPP…PSTP, and APPP…PLPP. 2 positions are modified to phosphoserine: Ser-330 and Ser-340. A compositionally biased stretch (pro residues) spans 336–361; that stretch reads PPLPSPGRSGPLPPPPSERPPPPVRD. XRSGPXPPXP motif repeat units follow at residues 342–351, 364–373, and 400–409; these read GRSGPLPPPP and PRSGPRPPLP. A compositionally biased stretch (pro residues) spans 403–424; sequence GPRPPLPPDRPGAGAPPPPPPS. Over residues 425-434 the composition is skewed to polar residues; it reads TSVRNGFQDS. Residues 470 to 484 are compositionally biased toward basic and acidic residues; that stretch reads ARNESRSGSNRRERG.

The protein belongs to the verprolin family. As to quaternary structure, binds to WAS within the N-terminal region, at a site distinct from the CDC42-binding site. Binds profilin and actin. Binds to WASL. Interacts with DBNL. Interacts with DBNL. Interacts with FNBP1L (via the SH3 domain).

It localises to the cytoplasmic vesicle. The protein localises to the cytoplasm. Its subcellular location is the cytoskeleton. The protein resides in the cell projection. It is found in the ruffle. Functionally, plays a role in the reorganization of the actin cytoskeleton. Contributes with NCK1 and GRB2 in the recruitment and activation of WASL. May participate in regulating the subcellular localization of WASL, resulting in the disassembly of stress fibers in favor of filopodia formation. Plays a role in the formation of cell ruffles. The polypeptide is WAS/WASL-interacting protein family member 1 (Wipf1) (Mus musculus (Mouse)).